The primary structure comprises 189 residues: GTP cyclohydrolase 1 (189 aa).

Residues cysteine 78, histidine 81, and cysteine 150 each contribute to the Zn(2+) site.

It belongs to the GTP cyclohydrolase I family. As to quaternary structure, toroid-shaped homodecamer, composed of two pentamers of five dimers.

It catalyses the reaction GTP + H2O = 7,8-dihydroneopterin 3'-triphosphate + formate + H(+). The protein operates within cofactor biosynthesis; 7,8-dihydroneopterin triphosphate biosynthesis; 7,8-dihydroneopterin triphosphate from GTP: step 1/1. The chain is GTP cyclohydrolase 1 from Listeria innocua serovar 6a (strain ATCC BAA-680 / CLIP 11262).